A 129-amino-acid chain; its full sequence is MTQMPQTNARVHAGRMAYHAGLSAEASVIREYESHGYVFEAQRWRGQVGEIDLVLRKSGLVVFVEVKKSKSFERAALRISPTQKRRIFATGEEFVAQEPQGLLTDMRFDVALVDAAGAVQILENALSEG.

This sequence belongs to the UPF0102 family.

In Roseobacter denitrificans (strain ATCC 33942 / OCh 114) (Erythrobacter sp. (strain OCh 114)), this protein is UPF0102 protein RD1_1191.